We begin with the raw amino-acid sequence, 496 residues long: N-acetylmuramoyl-L-alanine amidase LytC (496 aa).

Positions 1-24 (MRSYIKVLTMCFLGLILFVPTALA) are cleaved as a signal peptide. A run of 3 repeats spans residues 30-128 (RVGG…ISIK), 129-222 (RIAG…PSPT), and 223-318 (RISG…NPVV). A 3 X tandem repeats region spans residues 30–318 (RVGGSNRYGT…VANQLKNPVV (289 aa)). The 169-residue stretch at 322-490 (IFIDPGHGDQ…DKAAQAIHDG (169 aa)) folds into the MurNAc-LAA domain.

Belongs to the N-acetylmuramoyl-L-alanine amidase 3 family.

It is found in the secreted. It localises to the cell wall. The enzyme catalyses Hydrolyzes the link between N-acetylmuramoyl residues and L-amino acid residues in certain cell-wall glycopeptides.. In terms of biological role, autolysins are cell wall hydrolases involved in some important biological processes such as cell separation, cell-wall turnover, competence for genetic transformation, formation of the flagella - in particular of its basal body - and sporulation. Has a high affinity for teichoic acid-endowed peptidoglycan. LytC is required for efficient swarming motility but not at the level of cell separation or flagellum biosynthesis. Rather, LytC appears to be important for proper flagellar function. The polypeptide is N-acetylmuramoyl-L-alanine amidase LytC (lytC) (Bacillus subtilis (strain 168)).